Consider the following 149-residue polypeptide: Transcriptional repressor NrdR (149 aa).

A zinc finger spans residues cysteine 3 to cysteine 34. The 91-residue stretch at proline 49–glutamate 139 folds into the ATP-cone domain.

It belongs to the NrdR family. Requires Zn(2+) as cofactor.

In terms of biological role, negatively regulates transcription of bacterial ribonucleotide reductase nrd genes and operons by binding to NrdR-boxes. The sequence is that of Transcriptional repressor NrdR from Pectobacterium carotovorum subsp. carotovorum (strain PC1).